The chain runs to 296 residues: Light-independent protochlorophyllide reductase iron-sulfur ATP-binding protein (296 aa).

ATP is bound by residues 39 to 44 (GIGKST) and K68. S43 is a binding site for Mg(2+). Residues C124 and C158 each contribute to the [4Fe-4S] cluster site. Residue 209–210 (NR) participates in ATP binding.

This sequence belongs to the NifH/BchL/ChlL family. As to quaternary structure, homodimer. Protochlorophyllide reductase is composed of three subunits; ChlL, ChlN and ChlB. Requires [4Fe-4S] cluster as cofactor.

The catalysed reaction is chlorophyllide a + oxidized 2[4Fe-4S]-[ferredoxin] + 2 ADP + 2 phosphate = protochlorophyllide a + reduced 2[4Fe-4S]-[ferredoxin] + 2 ATP + 2 H2O. Its pathway is porphyrin-containing compound metabolism; chlorophyll biosynthesis (light-independent). Component of the dark-operative protochlorophyllide reductase (DPOR) that uses Mg-ATP and reduced ferredoxin to reduce ring D of protochlorophyllide (Pchlide) to form chlorophyllide a (Chlide). This reaction is light-independent. The L component serves as a unique electron donor to the NB-component of the complex, and binds Mg-ATP. This Synechococcus sp. (strain CC9605) protein is Light-independent protochlorophyllide reductase iron-sulfur ATP-binding protein.